We begin with the raw amino-acid sequence, 235 residues long: Orotidine 5'-phosphate decarboxylase (235 aa).

Substrate is bound by residues Asp10, Lys33, 60 to 69, Thr123, Arg185, Gln194, Gly214, and Arg215; that span reads DLKMNDIPNT. Lys62 serves as the catalytic Proton donor.

This sequence belongs to the OMP decarboxylase family. Type 1 subfamily. As to quaternary structure, homodimer.

The catalysed reaction is orotidine 5'-phosphate + H(+) = UMP + CO2. It functions in the pathway pyrimidine metabolism; UMP biosynthesis via de novo pathway; UMP from orotate: step 2/2. In terms of biological role, catalyzes the decarboxylation of orotidine 5'-monophosphate (OMP) to uridine 5'-monophosphate (UMP). The sequence is that of Orotidine 5'-phosphate decarboxylase from Lactobacillus johnsonii (strain CNCM I-12250 / La1 / NCC 533).